We begin with the raw amino-acid sequence, 55 residues long: Large ribosomal subunit protein bL33 (55 aa).

Belongs to the bacterial ribosomal protein bL33 family.

This chain is Large ribosomal subunit protein bL33, found in Vibrio cholerae serotype O1 (strain ATCC 39541 / Classical Ogawa 395 / O395).